A 392-amino-acid chain; its full sequence is tRNA (guanine(6)-N2)-methyltransferase (392 aa).

A THUMP domain is found at 73-183; the sequence is SAIPLLNHFS…DSELFVGVDT (111 aa). S-adenosyl-L-methionine contacts are provided by residues 199-203, 230-232, Glu-275, 303-304, and Asn-317; these read HPAHL, SGT, and DA.

Belongs to the methyltransferase superfamily.

It localises to the cytoplasm. It catalyses the reaction guanosine(6) in tRNA + S-adenosyl-L-methionine = N(2)-methylguanosine(6) in tRNA + S-adenosyl-L-homocysteine + H(+). S-adenosyl-L-methionine-dependent methyltransferase that catalyzes the methylation of the guanosine nucleotide at position 6 (m2G6) in tRNA. In Archaeoglobus fulgidus (strain ATCC 49558 / DSM 4304 / JCM 9628 / NBRC 100126 / VC-16), this protein is tRNA (guanine(6)-N2)-methyltransferase.